Consider the following 760-residue polypeptide: DEAD-box ATP-dependent RNA helicase 24 (760 aa).

2 disordered regions span residues 1–76 (MSNR…GEVD) and 90–113 (QEMK…DDDD). Positions 14–27 (NRQTSYSFERSQAP) are enriched in polar residues. Residues 41–64 (NSEDADLDNIDYMENEEAEEDIEE) show a composition bias toward acidic residues. A compositionally biased stretch (basic and acidic residues) spans 99–109 (KPKEKLERYKD). Ser-160 bears the Phosphoserine mark. The Q motif signature appears at 228–256 (KTFEDCGFSSQIMSAIKKQAYEKPTAIQC). A Helicase ATP-binding domain is found at 259 to 434 (LPIVLSGRDV…REILSDPIRV (176 aa)). Residue 272–279 (AKTGSGKT) coordinates ATP. The DEAD box motif lies at 382 to 385 (DEAD). A Helicase C-terminal domain is found at 459-608 (KLPWLLEKLP…NVPPELTDLA (150 aa)). Disordered stretches follow at residues 604–638 (LTDL…KGVR), 647–666 (GFSS…SRSG), and 706–760 (FVSG…GWDN). Positions 615–628 (KSKRDGRKGGKKGR) are enriched in basic residues. Residues 629-638 (GGGGGNKGVR) show a composition bias toward gly residues. The segment covering 649–666 (SSESSRTPSSKAAPSRSG) has biased composition (polar residues). The segment covering 707–716 (VSGGTIGGDM) has biased composition (gly residues). Residues 718–732 (RTQSQAPPVAPTQNA) show a composition bias toward polar residues. Low complexity predominate over residues 733-745 (SSHNSSQNHSQSS). The span at 750 to 760 (RERKRRSGWDN) shows a compositional bias: basic residues.

It belongs to the DEAD box helicase family.

It carries out the reaction ATP + H2O = ADP + phosphate + H(+). The polypeptide is DEAD-box ATP-dependent RNA helicase 24 (RH24) (Arabidopsis thaliana (Mouse-ear cress)).